Here is a 521-residue protein sequence, read N- to C-terminus: Sodium/hydrogen exchanger 5 (521 aa).

Residues 1–23 (MEEVMISPVEHDPQGQVKQQQAA) are Cytoplasmic-facing. A helical membrane pass occupies residues 24–44 (GVGILLQIMMLVLSFVLGHVL). Residues 45–48 (RRHR) are Lumenal-facing. Residues 49 to 69 (FHYLPEASGSLLIGLIVGILA) traverse the membrane as a helical segment. Residues 70–86 (NISDTETSIRTWFNFHE) lie on the Cytoplasmic side of the membrane. The segment at residues 87 to 107 (EFFFLFLLPPIIFQSGFSLQP) is an intramembrane region (helical). The Cytoplasmic segment spans residues 108–115 (KPFFSNFG). A helical membrane pass occupies residues 116 to 136 (AIVTFAIIGTFVASVVTGGLV). Over 137–141 (YLGGS) the chain is Lumenal. Intramembrane regions (helical) lie at residues 142–162 (MYLM…LISA) and 166–186 (VTVL…ALVF). Topologically, residues 187–222 (GESVLNDAMAISLYRTMSLVNRQSSSGEHFFMVVIR) are lumenal. The chain crosses the membrane as a helical span at residues 223 to 243 (FFETFAGSMSAGVGVGFTSAL). Topologically, residues 244–271 (LFKYAGLDTENLQNLECCLFVLFPYFSY) are cytoplasmic. Residues 272 to 292 (MLAEGVGLSGIVSILFTGIVM) form a helical membrane-spanning segment. At 293–310 (KRYTFSNLSEASQSFVSS) the chain is on the lumenal side. Asn-299 is a glycosylation site (N-linked (GlcNAc...) asparagine). The helical transmembrane segment at 311 to 331 (FFHLISSLAETFTFIYMGFDI) threads the bilayer. Residues 332–340 (AMEQHSWSH) are Cytoplasmic-facing. A helical membrane pass occupies residues 341-361 (VGFILFSILFIGVARAVNVFG). At 362 to 382 (CAYLVNLFRQENQKIPMKHQK) the chain is on the lumenal side. A helical membrane pass occupies residues 383-402 (ALWYSGLRGAMAFALALQSL). Over 403–411 (HDLPEGHGQ) the chain is Cytoplasmic. The chain crosses the membrane as a helical span at residues 412–432 (IIFTATTTIVVVTVLLIGGST). At 433 to 521 (GKMLEALEVV…NSGDGDGDGE (89 aa)) the chain is on the lumenal side. The tract at residues 453–480 (GFEESDHQYVPPPFSIGASSDEDTSSSG) is disordered. The segment covering 467–480 (SIGASSDEDTSSSG) has biased composition (low complexity).

Belongs to the monovalent cation:proton antiporter 1 (CPA1) transporter (TC 2.A.36) family. In terms of tissue distribution, expressed in roots, leaves, stems, flowers and siliques. Detected at low levels in roots and shoots.

Its subcellular location is the endosome membrane. It localises to the golgi apparatus. The protein localises to the trans-Golgi network membrane. It is found in the golgi stack membrane. The enzyme catalyses Na(+)(in) + H(+)(out) = Na(+)(out) + H(+)(in). It carries out the reaction K(+)(in) + H(+)(out) = K(+)(out) + H(+)(in). Involved in trafficking to the vacuole. Required for cell proliferation and cell expansion, but not for cell differentiation. Acts in low affinity electroneutral exchange of protons for cations such as Na(+) or K(+) across membranes. May also exchange Li(+) and Cs(+) with a lower affinity. This chain is Sodium/hydrogen exchanger 5 (NHX5), found in Arabidopsis thaliana (Mouse-ear cress).